A 209-amino-acid polypeptide reads, in one-letter code: Orotate phosphoribosyltransferase (209 aa).

Residues Arg-96, Lys-100, His-102, and Glu-122 to Ser-130 each bind 5-phospho-alpha-D-ribose 1-diphosphate. Residue Ser-126 participates in orotate binding.

It belongs to the purine/pyrimidine phosphoribosyltransferase family. PyrE subfamily. As to quaternary structure, homodimer. Mg(2+) serves as cofactor.

It catalyses the reaction orotidine 5'-phosphate + diphosphate = orotate + 5-phospho-alpha-D-ribose 1-diphosphate. It participates in pyrimidine metabolism; UMP biosynthesis via de novo pathway; UMP from orotate: step 1/2. Catalyzes the transfer of a ribosyl phosphate group from 5-phosphoribose 1-diphosphate to orotate, leading to the formation of orotidine monophosphate (OMP). The sequence is that of Orotate phosphoribosyltransferase from Streptococcus thermophilus (strain CNRZ 1066).